We begin with the raw amino-acid sequence, 311 residues long: Aspartate carbamoyltransferase catalytic subunit (311 aa).

2 residues coordinate carbamoyl phosphate: Arg-55 and Thr-56. Lys-85 is a binding site for L-aspartate. 3 residues coordinate carbamoyl phosphate: Arg-106, His-135, and Gln-138. L-aspartate-binding residues include Arg-168 and Arg-230. Residues Leu-268 and Pro-269 each coordinate carbamoyl phosphate.

It belongs to the aspartate/ornithine carbamoyltransferase superfamily. ATCase family. In terms of assembly, heterododecamer (2C3:3R2) of six catalytic PyrB chains organized as two trimers (C3), and six regulatory PyrI chains organized as three dimers (R2).

It catalyses the reaction carbamoyl phosphate + L-aspartate = N-carbamoyl-L-aspartate + phosphate + H(+). Its pathway is pyrimidine metabolism; UMP biosynthesis via de novo pathway; (S)-dihydroorotate from bicarbonate: step 2/3. Catalyzes the condensation of carbamoyl phosphate and aspartate to form carbamoyl aspartate and inorganic phosphate, the committed step in the de novo pyrimidine nucleotide biosynthesis pathway. This chain is Aspartate carbamoyltransferase catalytic subunit, found in Klebsiella pneumoniae subsp. pneumoniae (strain ATCC 700721 / MGH 78578).